The primary structure comprises 544 residues: CTP synthase (544 aa).

Residues 1 to 265 (MTKFIFVTGG…DDIICEHLDL (265 aa)) form an amidoligase domain region. Ser-13 is a binding site for CTP. Residue Ser-13 coordinates UTP. ATP-binding positions include 14–19 (SLGKGI) and Asp-71. Asp-71 and Glu-139 together coordinate Mg(2+). CTP is bound by residues 146-148 (DIE), 186-191 (KTKPTQ), and Lys-222. UTP is bound by residues 186 to 191 (KTKPTQ) and Lys-222. The Glutamine amidotransferase type-1 domain occupies 290–542 (NIAMVGKYVD…VEAALAYQAD (253 aa)). L-glutamine is bound at residue Gly-351. Cys-378 acts as the Nucleophile; for glutamine hydrolysis in catalysis. L-glutamine contacts are provided by residues 379 to 382 (LGMQ), Glu-402, and Arg-469. Active-site residues include His-515 and Glu-517.

The protein belongs to the CTP synthase family. As to quaternary structure, homotetramer.

It carries out the reaction UTP + L-glutamine + ATP + H2O = CTP + L-glutamate + ADP + phosphate + 2 H(+). The enzyme catalyses L-glutamine + H2O = L-glutamate + NH4(+). The catalysed reaction is UTP + NH4(+) + ATP = CTP + ADP + phosphate + 2 H(+). The protein operates within pyrimidine metabolism; CTP biosynthesis via de novo pathway; CTP from UDP: step 2/2. Allosterically activated by GTP, when glutamine is the substrate; GTP has no effect on the reaction when ammonia is the substrate. The allosteric effector GTP functions by stabilizing the protein conformation that binds the tetrahedral intermediate(s) formed during glutamine hydrolysis. Inhibited by the product CTP, via allosteric rather than competitive inhibition. Its function is as follows. Catalyzes the ATP-dependent amination of UTP to CTP with either L-glutamine or ammonia as the source of nitrogen. Regulates intracellular CTP levels through interactions with the four ribonucleotide triphosphates. This Laribacter hongkongensis (strain HLHK9) protein is CTP synthase.